The chain runs to 215 residues: E3 ubiquitin-protein ligase NleG (215 aa).

An RING/U-box domain region spans residues 136–189 (CPITLCIPETGVFVRNAKNSEICSLYDHNALTELIRRNAPHPLSREPFVPEMIV). Residues 213–215 (TRI) carry the PDZ-binding motif motif.

It belongs to the NleG E3 ligase family. As to quaternary structure, interacts with host GOPC (human protein). Post-translationally, two sizes of protein are detected upon expression in C.rodentium; only the smaller protein is secreted.

Its subcellular location is the secreted. It localises to the host cytoplasm. The catalysed reaction is S-ubiquitinyl-[E2 ubiquitin-conjugating enzyme]-L-cysteine + [acceptor protein]-L-lysine = [E2 ubiquitin-conjugating enzyme]-L-cysteine + N(6)-ubiquitinyl-[acceptor protein]-L-lysine.. Effector proteins function to alter host cell physiology and promote bacterial survival in host tissues. This protein is an E3 ubiquitin-protein ligase that probably interferes with the host's ubiquitination pathway and targets host proteins for proteasomal degradation. Can ubiquitinate ubiquitin, giving rise to polyubiquitin chains (in vitro). Does not complement an nleG8 deletion in C.rodentium. The sequence is that of E3 ubiquitin-protein ligase NleG from Escherichia coli O157:H7.